The sequence spans 447 residues: Glucose-6-phosphate isomerase (447 aa).

The Proton donor role is filled by Glu287. Residues His308 and Lys422 contribute to the active site.

Belongs to the GPI family.

Its subcellular location is the cytoplasm. It catalyses the reaction alpha-D-glucose 6-phosphate = beta-D-fructose 6-phosphate. Its pathway is carbohydrate biosynthesis; gluconeogenesis. The protein operates within carbohydrate degradation; glycolysis; D-glyceraldehyde 3-phosphate and glycerone phosphate from D-glucose: step 2/4. In terms of biological role, catalyzes the reversible isomerization of glucose-6-phosphate to fructose-6-phosphate. This Heliobacterium modesticaldum (strain ATCC 51547 / Ice1) protein is Glucose-6-phosphate isomerase.